A 136-amino-acid chain; its full sequence is MTPVPPSSLRSIAPLSTVFLFTDNVRSNSWFVCKIVYRCLSPRRIISPSICTAFSCWANHGLRLSSTAAMRRSSSSTFLFMASTRMSSSTFVCFIFVFCVSRTAMVFWSFSESTSLLWCIISSSMRLCFSITSGST.

This is an uncharacterized protein from Ictaluridae (bullhead catfishes).